Here is a 289-residue protein sequence, read N- to C-terminus: Dihydropteroate synthase (289 aa).

In terms of domain architecture, Pterin-binding spans 28–282 (TYVMGILNTT…DVEAMAQICK (255 aa)). Residue Asn35 participates in Mg(2+) binding. (7,8-dihydropterin-6-yl)methyl diphosphate is bound by residues Thr75, Asp109, Asn128, Asp199, Lys235, and 270-272 (RVH).

Belongs to the DHPS family. Mg(2+) is required as a cofactor.

The catalysed reaction is (7,8-dihydropterin-6-yl)methyl diphosphate + 4-aminobenzoate = 7,8-dihydropteroate + diphosphate. It participates in cofactor biosynthesis; tetrahydrofolate biosynthesis; 7,8-dihydrofolate from 2-amino-4-hydroxy-6-hydroxymethyl-7,8-dihydropteridine diphosphate and 4-aminobenzoate: step 1/2. Its function is as follows. Catalyzes the condensation of para-aminobenzoate (pABA) with 6-hydroxymethyl-7,8-dihydropterin diphosphate (DHPt-PP) to form 7,8-dihydropteroate (H2Pte), the immediate precursor of folate derivatives. This is Dihydropteroate synthase (folP) from Synechocystis sp. (strain ATCC 27184 / PCC 6803 / Kazusa).